The primary structure comprises 216 residues: Cytochrome c-type protein Cgr1 (216 aa).

The helical transmembrane segment at 18 to 38 (WPIVVGVVVVVLIAAGAGFWV) threads the bilayer. Positions 46, 50, 51, 95, 98, 99, 142, 147, 148, 176, 179, 180, 190, 193, and 194 each coordinate heme.

Belongs to the multiheme cytochrome c family. May form a membrane-associated complex with Cgr2. Binds 5 heme groups per subunit.

It is found in the cell membrane. Its function is as follows. Probably transfers electrons from a membrane-associated electron donor (e.g. the membrane quinone pool) to the [4Fe-4S] cluster of the Cgr2 reductase via its covalently bound heme groups. The protein is Cytochrome c-type protein Cgr1 of Eggerthella lenta (strain ATCC 25559 / DSM 2243 / CCUG 17323 / JCM 9979 / KCTC 3265 / NCTC 11813 / VPI 0255 / 1899 B) (Eubacterium lentum).